The sequence spans 813 residues: Phosphate transporter PHO1 homolog 3 (813 aa).

Residues 1–359 (MKFGKEFSSQ…SRDATKPYMK (359 aa)) form the SPX domain. Topologically, residues 1-411 (MKFGKEFSSQ…KAKRERHRIT (411 aa)) are cytoplasmic. Residues 214–266 (EHMEAIQEGGSSRAGLMEDDEEDEDEQNETSVVSTGAIDNETTTSRMRGARPS) are disordered. Acidic residues predominate over residues 230 to 241 (MEDDEEDEDEQN). The chain crosses the membrane as a helical span at residues 412–432 (FSTGFSAGCVFSLIVALVAII). Topologically, residues 433 to 450 (RTRNLLEMEGQKEYMNTM) are extracellular. The helical transmembrane segment at 451-471 (FPLYSLFGFIVLHIIVYAANI) threads the bilayer. At 472 to 496 (YYWRRYRVNYSFIFGFKQGTELGYR) the chain is on the cytoplasmic side. A helical membrane pass occupies residues 497–517 (QVLLVGFSIGVLALLCVLANL). The Extracellular segment spans residues 518–533 (DMEADPKTKAYQARTE). Residues 534–554 (ILPLILLAAMFIVLVLPFNYF) form a helical membrane-spanning segment. The Cytoplasmic portion of the chain corresponds to 555-684 (YRSSRFFFLT…SIQKGQVAWR (130 aa)). One can recognise an EXS domain in the interval 618-813 (KESDVYNTFF…NYDEDDDKDN (196 aa)). The helical transmembrane segment at 685–705 (VLAAVFSFIAAIFCTYWDFVH) threads the bilayer. The Extracellular segment spans residues 706–729 (DWGLLNRTSKNRWLRDKLLVPQKK). A helical transmembrane segment spans residues 730–750 (VYFIAMVLNVLLRFAWIQTVL). The Cytoplasmic portion of the chain corresponds to 751–813 (DFNFSFMHRQ…NYDEDDDKDN (63 aa)).

It belongs to the SYG1 (TC 2.A.94) family. In terms of tissue distribution, expressed in vascular cylinder of roots, leaves and filaments. Expressed in receptacle and stigma apex.

The protein resides in the cell membrane. Functionally, may transport inorganic phosphate (Pi). This is Phosphate transporter PHO1 homolog 3 (PHO1;H3) from Arabidopsis thaliana (Mouse-ear cress).